The sequence spans 85 residues: CDC42 small effector protein 2 (85 aa).

S-palmitoyl cysteine attachment occurs at residues C10 and C11. Residues 29-42 (IGEPTNFVHTAHVG) form the CRIB domain.

Belongs to the CDC42SE/SPEC family.

It localises to the cytoplasm. The protein resides in the cytoskeleton. The protein localises to the cell membrane. Its function is as follows. Probably involved in the organization of the actin cytoskeleton by acting downstream of CDC42, inducing actin filament assembly. This Danio rerio (Zebrafish) protein is CDC42 small effector protein 2 (cdc42se2).